A 1210-amino-acid chain; its full sequence is ATP-dependent helicase/nuclease subunit A (1210 aa).

Residues 27–483 (QKRTAQQIEA…ILLKENFRSQ (457 aa)) form the UvrD-like helicase ATP-binding domain. 48 to 55 (ASAGSGKT) provides a ligand contact to ATP. Positions 512–798 (QLIAGSHAQT…NLMTIHKSKG (287 aa)) constitute a UvrD-like helicase C-terminal domain.

This sequence belongs to the helicase family. AddA subfamily. Heterodimer of AddA and AddB/RexB. It depends on Mg(2+) as a cofactor.

It carries out the reaction Couples ATP hydrolysis with the unwinding of duplex DNA by translocating in the 3'-5' direction.. The enzyme catalyses ATP + H2O = ADP + phosphate + H(+). In terms of biological role, the heterodimer acts as both an ATP-dependent DNA helicase and an ATP-dependent, dual-direction single-stranded exonuclease. Recognizes the chi site generating a DNA molecule suitable for the initiation of homologous recombination. The AddA nuclease domain is required for chi fragment generation; this subunit has the helicase and 3' -&gt; 5' nuclease activities. This is ATP-dependent helicase/nuclease subunit A from Streptococcus pyogenes serotype M5 (strain Manfredo).